The primary structure comprises 387 residues: Putative transmembrane protein At3g54730 (387 aa).

The segment covering proline 10–alanine 25 has biased composition (pro residues). Residues proline 10–proline 45 are disordered. 8 helical membrane-spanning segments follow: residues valine 97–valine 117, glycine 128–phenylalanine 148, valine 154–leucine 174, valine 186–isoleucine 206, isoleucine 221–isoleucine 241, serine 292–glutamate 312, phenylalanine 335–phenylalanine 355, and proline 362–phenylalanine 382.

It localises to the membrane. This Arabidopsis thaliana (Mouse-ear cress) protein is Putative transmembrane protein At3g54730.